The following is a 272-amino-acid chain: Enoyl-[acyl-carrier-protein] reductase [NADH] 1 (272 aa).

Residues Gly17, 23–24 (SI), Gln44, 68–69 (DV), and Ile96 contribute to the NAD(+) site. Active-site proton acceptor residues include Tyr149 and Tyr159. Residues Lys166 and 195 to 199 (IKTLA) contribute to the NAD(+) site.

The protein belongs to the short-chain dehydrogenases/reductases (SDR) family. FabI subfamily.

The protein resides in the cell inner membrane. The catalysed reaction is a 2,3-saturated acyl-[ACP] + NAD(+) = a (2E)-enoyl-[ACP] + NADH + H(+). It functions in the pathway lipid metabolism; fatty acid biosynthesis. The chain is Enoyl-[acyl-carrier-protein] reductase [NADH] 1 (fabI1) from Rhizobium meliloti (strain 1021) (Ensifer meliloti).